The primary structure comprises 583 residues: Chromosomal replication initiator protein DnaA (583 aa).

A domain I, interacts with DnaA modulators region spans residues 1 to 91 (MNAENLDPAT…SPMFPAFKVM (91 aa)). Disordered stretches follow at residues 86–179 (PAFK…QQPV) and 197–232 (VAGFGPSVAGTTAPQYPPQSEMQGSFTPGVTGNYRD). The tract at residues 91–235 (MPPAQPEPQT…VTGNYRDPVT (145 aa)) is domain II. The segment covering 97 to 106 (EPQTTASPED) has biased composition (polar residues). Basic and acidic residues-rich tracts occupy residues 126–135 (EDSRTPRHSA) and 147–174 (QEREDSAVHMARPDEQTAESHREPEHEP). Over residues 205–226 (AGTTAPQYPPQSEMQGSFTPGV) the composition is skewed to polar residues. Residues 236–460 (HLNSNDTFDT…GALKRVIAMA (225 aa)) are domain III, AAA+ region. Positions 280, 282, 283, and 284 each coordinate ATP. Residues 461 to 583 (SLNHQPVTRA…TVELKQHLND (123 aa)) form a domain IV, binds dsDNA region.

Belongs to the DnaA family. In terms of assembly, oligomerizes as a right-handed, spiral filament on DNA at oriC.

It is found in the cytoplasm. Plays an essential role in the initiation and regulation of chromosomal replication. ATP-DnaA binds to the origin of replication (oriC) to initiate formation of the DNA replication initiation complex once per cell cycle. Binds the DnaA box (a 9 base pair repeat at the origin) and separates the double-stranded (ds)DNA. Forms a right-handed helical filament on oriC DNA; dsDNA binds to the exterior of the filament while single-stranded (ss)DNA is stabiized in the filament's interior. The ATP-DnaA-oriC complex binds and stabilizes one strand of the AT-rich DNA unwinding element (DUE), permitting loading of DNA polymerase. After initiation quickly degrades to an ADP-DnaA complex that is not apt for DNA replication. Binds acidic phospholipids. The chain is Chromosomal replication initiator protein DnaA from Bifidobacterium animalis subsp. lactis (strain AD011).